The following is a 489-amino-acid chain: Rhamnulokinase (489 aa).

Residue 13–17 (ASSGR) participates in ATP binding. A disulfide bond links Cys68 and Cys222. Substrate contacts are provided by residues Gly83 and 236–238 (HDT). Asp237 serves as the catalytic Proton acceptor. Thr259 is a binding site for ATP. Position 296 (Asn296) interacts with substrate. Gln304 contributes to the ATP binding site. Cys353 and Cys370 are disulfide-bonded. Gly402 provides a ligand contact to ATP. A disulfide bridge links Cys413 with Cys417.

This sequence belongs to the rhamnulokinase family. Monomer. The cofactor is Mg(2+).

It carries out the reaction L-rhamnulose + ATP = L-rhamnulose 1-phosphate + ADP + H(+). Its pathway is carbohydrate degradation; L-rhamnose degradation; glycerone phosphate from L-rhamnose: step 2/3. Involved in the catabolism of L-rhamnose (6-deoxy-L-mannose). Catalyzes the transfer of the gamma-phosphate group from ATP to the 1-hydroxyl group of L-rhamnulose to yield L-rhamnulose 1-phosphate. The sequence is that of Rhamnulokinase from Escherichia coli (strain 55989 / EAEC).